We begin with the raw amino-acid sequence, 1953 residues long: Protein BNI1 (1953 aa).

4 disordered regions span residues 1–152, 230–258, 263–282, and 287–306; these read MLKN…ASSL, MRAN…ANSS, KSVL…SNSL, and TLSS…SGSL. Positions 31–40 are enriched in low complexity; sequence ANSNATNSNT. Polar residues-rich tracts occupy residues 41-100 and 110-143; these read GSPT…SQYM and VSSQ…RQHT. A GBD/FH3 domain is found at 174–696; it reads EMPSDPYEVE…NVSVASTSDE (523 aa). A compositionally biased stretch (low complexity) spans 232–246; sequence ANTTSSSTASRTSMA. A compositionally biased stretch (polar residues) spans 263–278; the sequence is KSVLMTSASSPTSTVY. A phosphoserine mark is found at Ser-311 and Ser-325. The interval 312–337 is disordered; that stretch reads LNNIYRGGAENNTSASTLPGDRTNRP. Coiled-coil stretches lie at residues 712–807, 864–894, and 928–981; these read QTDE…TILN, NKRL…EFEK, and NKLN…YKGF. 3 disordered regions span residues 990-1014, 1040-1094, and 1149-1330; these read IMDS…SLDP, HEIQ…LDAL, and TQKV…MPAS. The region spanning 1053–1337 is the FH1 domain; it reads SSSSSDDESE…PASQIKSAVT (285 aa). Ser-1085 and Ser-1170 each carry phosphoserine. The span at 1184–1211 shows a compositional bias: basic and acidic residues; the sequence is DKAEKDMRQHVENGKQGRVVNHEEDKTA. Residues 1217–1237 show a composition bias toward polar residues; the sequence is SKLNNTDGAEDLSTQSSVLSS. Over residues 1238–1250 the composition is skewed to pro residues; sequence QPPPPPPPPPPVP. Over residues 1257–1270 the composition is skewed to basic and acidic residues; sequence SLEKEKKSEDDTVK. Positions 1278 to 1292 are enriched in pro residues; the sequence is PAPPPPPPPPPPPPM. A phosphoserine mark is found at Ser-1338 and Ser-1344. The 419-residue stretch at 1348 to 1766 folds into the FH2 domain; it reads FEKYPRPHKK…YIKHKKIVEE (419 aa). The stretch at 1732-1811 forms a coiled coil; sequence KFADFINEYK…DKLLEQLKNA (80 aa). Positions 1768 to 1779 are enriched in basic and acidic residues; sequence QKRAQEKEKQKE. Disordered regions lie at residues 1768 to 1797, 1809 to 1844, and 1872 to 1899; these read QKRA…AEDR, KNAG…LLND, and PTPL…LEDQ. One can recognise a DAD domain in the interval 1792-1826; that stretch reads DEAEDRRAVMDKLLEQLKNAGPAKSDPSSARKRAL. Positions 1821–1830 are enriched in basic residues; sequence ARKRALVRKK. Positions 1880–1896 are enriched in polar residues; the sequence is VMNTSEDLPSPSKTSAL. Thr-1918 carries the post-translational modification Phosphothreonine.

It belongs to the formin homology family. BNI1 subfamily. In terms of assembly, homodimer, and possibly also homotetramer. Interacts with PFY1 via the FH1 domain and with actin via the FH2 domain.

The protein localises to the cell membrane. The protein resides in the cell projection. It is found in the ruffle membrane. Its subcellular location is the cytoplasm. It localises to the cytoskeleton. Required for the assembly of F-actin structures, such as actin cables and stress fibers. Nucleates actin filaments. Binds to the barbed end of the actin filament and acts as a leaky capper, slowing both polymerization and depolymerization. Protects the growing actin fiber from tight capping proteins and so increases the time of elongation and the total amount of F-actin. May organize microtubules by mediating spindle positioning and movement in the budding process. Potential target of the RHO family members. The sequence is that of Protein BNI1 (BNI1) from Saccharomyces cerevisiae (strain ATCC 204508 / S288c) (Baker's yeast).